Reading from the N-terminus, the 311-residue chain is Oxygen-dependent coproporphyrinogen-III oxidase (311 aa).

Substrate is bound at residue S93. A divalent metal cation is bound by residues H97 and H107. H107 functions as the Proton donor in the catalytic mechanism. 109–111 (NVR) lines the substrate pocket. A divalent metal cation contacts are provided by H153 and H184. The important for dimerization stretch occupies residues 252–287 (YVEFNLVFDRGTLFGLQSGGRTESILMSLPPVVKWR). Residue 270–272 (GGR) participates in substrate binding.

Belongs to the aerobic coproporphyrinogen-III oxidase family. Homodimer. Requires a divalent metal cation as cofactor.

It is found in the cytoplasm. The enzyme catalyses coproporphyrinogen III + O2 + 2 H(+) = protoporphyrinogen IX + 2 CO2 + 2 H2O. It functions in the pathway porphyrin-containing compound metabolism; protoporphyrin-IX biosynthesis; protoporphyrinogen-IX from coproporphyrinogen-III (O2 route): step 1/1. Involved in the heme biosynthesis. Catalyzes the aerobic oxidative decarboxylation of propionate groups of rings A and B of coproporphyrinogen-III to yield the vinyl groups in protoporphyrinogen-IX. In Aromatoleum aromaticum (strain DSM 19018 / LMG 30748 / EbN1) (Azoarcus sp. (strain EbN1)), this protein is Oxygen-dependent coproporphyrinogen-III oxidase.